The following is an 809-amino-acid chain: Ferric-pyoverdine BN7/BN8 receptor (809 aa).

The first 45 residues, 1 to 45 (MNHTARKRQGWQRSVSQKLAGAVVQGIACMGASAPLLLMPAWATA), serve as a signal peptide directing secretion. The region spanning 166-273 (TPRETPQSLT…PSATINLIRK (108 aa)) is the TBDR plug domain. The region spanning 278–809 (EAQASITGEA…NVMTSFKYSF (532 aa)) is the TBDR beta-barrel domain. The TonB C-terminal box motif lies at 792–809 (YGVYGTPRNVMTSFKYSF).

The protein belongs to the TonB-dependent receptor family.

It localises to the cell outer membrane. Specific receptor for the siderophores ferric pyoverdines (pseudobactins) BN8 and BN7, iron chelating molecules that allow the organism to extract iron from the environment, especially under iron-restricted conditions. The sequence is that of Ferric-pyoverdine BN7/BN8 receptor (pupB) from Pseudomonas putida (Arthrobacter siderocapsulatus).